A 224-amino-acid polypeptide reads, in one-letter code: Small ribosomal subunit protein uS5 (224 aa).

Residues 1–38 (MAEQSAGGQGAPEGRDSRDSREGRGRRDGGRGGRDSDK) are disordered. The segment covering 13-38 (EGRDSRDSREGRGRRDGGRGGRDSDK) has biased composition (basic and acidic residues). The S5 DRBM domain maps to 41-104 (YLERVVAINR…EEARKGFFRV (64 aa)).

Belongs to the universal ribosomal protein uS5 family. Part of the 30S ribosomal subunit. Contacts proteins S4 and S8.

In terms of biological role, with S4 and S12 plays an important role in translational accuracy. Functionally, located at the back of the 30S subunit body where it stabilizes the conformation of the head with respect to the body. This is Small ribosomal subunit protein uS5 from Mycobacterium ulcerans (strain Agy99).